Here is a 346-residue protein sequence, read N- to C-terminus: Histidinol-phosphate aminotransferase (346 aa).

The residue at position 209 (K209) is an N6-(pyridoxal phosphate)lysine.

Belongs to the class-II pyridoxal-phosphate-dependent aminotransferase family. Histidinol-phosphate aminotransferase subfamily. In terms of assembly, homodimer. The cofactor is pyridoxal 5'-phosphate.

The enzyme catalyses L-histidinol phosphate + 2-oxoglutarate = 3-(imidazol-4-yl)-2-oxopropyl phosphate + L-glutamate. Its pathway is amino-acid biosynthesis; L-histidine biosynthesis; L-histidine from 5-phospho-alpha-D-ribose 1-diphosphate: step 7/9. The polypeptide is Histidinol-phosphate aminotransferase (Vibrio vulnificus (strain CMCP6)).